A 248-amino-acid polypeptide reads, in one-letter code: Pyridoxine 5'-phosphate synthase (248 aa).

Asn-7 provides a ligand contact to 3-amino-2-oxopropyl phosphate. Residue 9 to 10 (DH) coordinates 1-deoxy-D-xylulose 5-phosphate. 3-amino-2-oxopropyl phosphate is bound at residue Arg-18. His-43 functions as the Proton acceptor in the catalytic mechanism. 1-deoxy-D-xylulose 5-phosphate-binding residues include Arg-45 and His-50. Catalysis depends on Glu-70, which acts as the Proton acceptor. Thr-100 is a 1-deoxy-D-xylulose 5-phosphate binding site. The active-site Proton donor is His-191. 3-amino-2-oxopropyl phosphate contacts are provided by residues Gly-192 and 213–214 (GH).

This sequence belongs to the PNP synthase family. As to quaternary structure, homooctamer; tetramer of dimers.

The protein resides in the cytoplasm. The enzyme catalyses 3-amino-2-oxopropyl phosphate + 1-deoxy-D-xylulose 5-phosphate = pyridoxine 5'-phosphate + phosphate + 2 H2O + H(+). It participates in cofactor biosynthesis; pyridoxine 5'-phosphate biosynthesis; pyridoxine 5'-phosphate from D-erythrose 4-phosphate: step 5/5. In terms of biological role, catalyzes the complicated ring closure reaction between the two acyclic compounds 1-deoxy-D-xylulose-5-phosphate (DXP) and 3-amino-2-oxopropyl phosphate (1-amino-acetone-3-phosphate or AAP) to form pyridoxine 5'-phosphate (PNP) and inorganic phosphate. The protein is Pyridoxine 5'-phosphate synthase of Bordetella bronchiseptica (strain ATCC BAA-588 / NCTC 13252 / RB50) (Alcaligenes bronchisepticus).